Here is a 343-residue protein sequence, read N- to C-terminus: MSNTDKERAIAAALAQIEKSYGKGSVMKLGQRPHVDIEAVSTGSLGLDIALGIGGVPKGRIIEIFGPESSGKTTLTLHLIAEAQKKGGTCAFIDAEHALDPAYAKKLGVNIDELIISQPDTGEQALEIADTLIRSSGIDMIIIDSVAALVPKSEIEGEMGDAQMASQARLMSQALRKLTASINRTNCIAVFINQIRMKIGVMFGSPETTTGGNALKFYASVRIDIRRIGSIKDKEEVIGSQTKVKVVKNKVSPPFKTADFDIMYGSGISKEGEIIDLGVKLDIVEKSGSWFSYKNVRIGQGRENVKQYLKEHPQISNEIEKIIREKSSKITNINLDQTEEEND.

ATP is bound at residue 66-73; it reads GPESSGKT.

This sequence belongs to the RecA family.

The protein localises to the cytoplasm. Its function is as follows. Can catalyze the hydrolysis of ATP in the presence of single-stranded DNA, the ATP-dependent uptake of single-stranded DNA by duplex DNA, and the ATP-dependent hybridization of homologous single-stranded DNAs. It interacts with LexA causing its activation and leading to its autocatalytic cleavage. The chain is Protein RecA from Rickettsia africae (strain ESF-5).